Reading from the N-terminus, the 375-residue chain is Succinyl-diaminopimelate desuccinylase (375 aa).

H66 contributes to the Zn(2+) binding site. The active site involves D68. D99 lines the Zn(2+) pocket. E133 acts as the Proton acceptor in catalysis. The Zn(2+) site is built by E134, E162, and H348.

This sequence belongs to the peptidase M20A family. DapE subfamily. In terms of assembly, homodimer. Zn(2+) is required as a cofactor. Requires Co(2+) as cofactor.

It carries out the reaction N-succinyl-(2S,6S)-2,6-diaminopimelate + H2O = (2S,6S)-2,6-diaminopimelate + succinate. It functions in the pathway amino-acid biosynthesis; L-lysine biosynthesis via DAP pathway; LL-2,6-diaminopimelate from (S)-tetrahydrodipicolinate (succinylase route): step 3/3. Catalyzes the hydrolysis of N-succinyl-L,L-diaminopimelic acid (SDAP), forming succinate and LL-2,6-diaminopimelate (DAP), an intermediate involved in the bacterial biosynthesis of lysine and meso-diaminopimelic acid, an essential component of bacterial cell walls. The protein is Succinyl-diaminopimelate desuccinylase of Yersinia enterocolitica serotype O:8 / biotype 1B (strain NCTC 13174 / 8081).